Reading from the N-terminus, the 359-residue chain is Histidinol-phosphate aminotransferase (359 aa).

Position 212 is an N6-(pyridoxal phosphate)lysine (Lys-212).

It belongs to the class-II pyridoxal-phosphate-dependent aminotransferase family. Histidinol-phosphate aminotransferase subfamily. Homodimer. Pyridoxal 5'-phosphate is required as a cofactor.

It catalyses the reaction L-histidinol phosphate + 2-oxoglutarate = 3-(imidazol-4-yl)-2-oxopropyl phosphate + L-glutamate. It participates in amino-acid biosynthesis; L-histidine biosynthesis; L-histidine from 5-phospho-alpha-D-ribose 1-diphosphate: step 7/9. The protein is Histidinol-phosphate aminotransferase of Buchnera aphidicola subsp. Schlechtendalia chinensis.